The primary structure comprises 441 residues: Serine carboxypeptidase-like 3 (441 aa).

The first 30 residues, 1–30, serve as a signal peptide directing secretion; the sequence is MASNYVFSVLRSLLLLIHTVFLGQHHVSSA. 3 disulfide bridges follow: C88–C331, C252–C266, and C290–C297. The N-linked (GlcNAc...) asparagine glycan is linked to N109. S184 is a catalytic residue. N350 carries an N-linked (GlcNAc...) asparagine glycan. Residue D366 is part of the active site. N382 carries an N-linked (GlcNAc...) asparagine glycan. Residue H419 is part of the active site.

This sequence belongs to the peptidase S10 family. Expressed in roots.

Its subcellular location is the secreted. Probable carboxypeptidase. The polypeptide is Serine carboxypeptidase-like 3 (SCPL3) (Arabidopsis thaliana (Mouse-ear cress)).